The sequence spans 90 residues: Small ribosomal subunit protein bS16 (90 aa).

The protein belongs to the bacterial ribosomal protein bS16 family.

This chain is Small ribosomal subunit protein bS16, found in Shouchella clausii (strain KSM-K16) (Alkalihalobacillus clausii).